A 152-amino-acid chain; its full sequence is Adrenodoxin-like protein 2, mitochondrial (152 aa).

The transit peptide at 1 to 29 (MLVINSCRAASRLALRSLNLRSPIATRTF) directs the protein to the mitochondrion. A 2Fe-2S ferredoxin-type domain is found at 41 to 146 (VNITFVRANG…GLEVHVPSTI (106 aa)). [2Fe-2S] cluster is bound by residues cysteine 80, cysteine 86, cysteine 89, and cysteine 127.

Belongs to the adrenodoxin/putidaredoxin family. The cofactor is [2Fe-2S] cluster.

It is found in the mitochondrion. Its function is as follows. Required for ecdysteroidogenesis in the prothoracic gland which is necessary for larval to pupal transition. The protein is Adrenodoxin-like protein 2, mitochondrial of Drosophila melanogaster (Fruit fly).